We begin with the raw amino-acid sequence, 427 residues long: Rhodocoxin reductase (427 aa).

Residue serine 2 to glutamate 34 coordinates FAD. Serine 144–glutamate 172 provides a ligand contact to NAD(+).

It belongs to the FAD-dependent oxidoreductase family. FAD is required as a cofactor.

In terms of biological role, the degradation of the thiocarbamate herbicide EPTC by cytochrome CYP116 (thcB) requires the participation of a flavoprotein, rhodocoxin reductase, and an iron-sulfur protein, rhodocoxin, to mediate the transfer of electrons from NADH to P450 for oxygen activation. The protein is Rhodocoxin reductase (thcD) of Rhodococcus erythropolis (Arthrobacter picolinophilus).